A 367-amino-acid chain; its full sequence is Peptide chain release factor 2 (367 aa).

Glutamine 254 carries the N5-methylglutamine modification.

This sequence belongs to the prokaryotic/mitochondrial release factor family. In terms of processing, methylated by PrmC. Methylation increases the termination efficiency of RF2.

It is found in the cytoplasm. Peptide chain release factor 2 directs the termination of translation in response to the peptide chain termination codons UGA and UAA. The chain is Peptide chain release factor 2 from Leptospira interrogans serogroup Icterohaemorrhagiae serovar Lai (strain 56601).